The following is an 808-amino-acid chain: Phenylalanine--tRNA ligase beta subunit (808 aa).

The 118-residue stretch at 40-157 folds into the tRNA-binding domain; that stretch reads NKGATNVVVG…QSVEPGQDAL (118 aa). One can recognise a B5 domain in the interval 411–486; it reads RSERVIALDL…RLYGYDELPS (76 aa). Mg(2+)-binding residues include aspartate 464, aspartate 470, glutamate 473, and glutamate 474. Residues 714 to 807 form the FDX-ACB domain; it reads PRYPAITRDM…VQKQTGAVLR (94 aa).

It belongs to the phenylalanyl-tRNA synthetase beta subunit family. Type 1 subfamily. In terms of assembly, tetramer of two alpha and two beta subunits. Mg(2+) serves as cofactor.

It is found in the cytoplasm. It carries out the reaction tRNA(Phe) + L-phenylalanine + ATP = L-phenylalanyl-tRNA(Phe) + AMP + diphosphate + H(+). The protein is Phenylalanine--tRNA ligase beta subunit of Shouchella clausii (strain KSM-K16) (Alkalihalobacillus clausii).